The primary structure comprises 327 residues: Tetraacyldisaccharide 4'-kinase (327 aa).

Threonine 52–threonine 59 provides a ligand contact to ATP.

The protein belongs to the LpxK family.

It carries out the reaction a lipid A disaccharide + ATP = a lipid IVA + ADP + H(+). The protein operates within glycolipid biosynthesis; lipid IV(A) biosynthesis; lipid IV(A) from (3R)-3-hydroxytetradecanoyl-[acyl-carrier-protein] and UDP-N-acetyl-alpha-D-glucosamine: step 6/6. In terms of biological role, transfers the gamma-phosphate of ATP to the 4'-position of a tetraacyldisaccharide 1-phosphate intermediate (termed DS-1-P) to form tetraacyldisaccharide 1,4'-bis-phosphate (lipid IVA). This Gluconacetobacter diazotrophicus (strain ATCC 49037 / DSM 5601 / CCUG 37298 / CIP 103539 / LMG 7603 / PAl5) protein is Tetraacyldisaccharide 4'-kinase.